A 180-amino-acid polypeptide reads, in one-letter code: ATP synthase subunit delta (180 aa).

The protein belongs to the ATPase delta chain family. F-type ATPases have 2 components, F(1) - the catalytic core - and F(0) - the membrane proton channel. F(1) has five subunits: alpha(3), beta(3), gamma(1), delta(1), epsilon(1). CF(0) has four main subunits: a(1), b(1), b'(1) and c(10-14). The alpha and beta chains form an alternating ring which encloses part of the gamma chain. F(1) is attached to F(0) by a central stalk formed by the gamma and epsilon chains, while a peripheral stalk is formed by the delta, b and b' chains.

It localises to the cellular thylakoid membrane. In terms of biological role, f(1)F(0) ATP synthase produces ATP from ADP in the presence of a proton or sodium gradient. F-type ATPases consist of two structural domains, F(1) containing the extramembraneous catalytic core and F(0) containing the membrane proton channel, linked together by a central stalk and a peripheral stalk. During catalysis, ATP synthesis in the catalytic domain of F(1) is coupled via a rotary mechanism of the central stalk subunits to proton translocation. Its function is as follows. This protein is part of the stalk that links CF(0) to CF(1). It either transmits conformational changes from CF(0) to CF(1) or is implicated in proton conduction. The polypeptide is ATP synthase subunit delta (Prochlorococcus marinus (strain MIT 9215)).